The following is a 190-amino-acid chain: Elongation factor P (190 aa).

It belongs to the elongation factor P family.

The protein resides in the cytoplasm. It participates in protein biosynthesis; polypeptide chain elongation. Functionally, involved in peptide bond synthesis. Stimulates efficient translation and peptide-bond synthesis on native or reconstituted 70S ribosomes in vitro. Probably functions indirectly by altering the affinity of the ribosome for aminoacyl-tRNA, thus increasing their reactivity as acceptors for peptidyl transferase. The protein is Elongation factor P of Sulfurihydrogenibium sp. (strain YO3AOP1).